The following is a 219-amino-acid chain: MSRISKAEMSKLLSVYFIMGSNNCTKDPLQVLREALEGGITIFQFREKGEGALTGEERICFAKELQAICKEYGVPFIVNDDVELALELDADGVHVGQDDEGITSVREKMGDKIVGVSTHTIEEARWAIENGADYLGVGPIFPTSTKKDTKAVQGTKGLAHFREQGITIPIVGIGGISIENTALVIEAGADGVSVISAISLAESAYESTKKLVEEVSRSL.

4-amino-2-methyl-5-(diphosphooxymethyl)pyrimidine-binding positions include 44–48 and N79; that span reads QFREK. Mg(2+) contacts are provided by D80 and D99. S117 serves as a coordination point for 4-amino-2-methyl-5-(diphosphooxymethyl)pyrimidine. Residue 143-145 participates in 2-[(2R,5Z)-2-carboxy-4-methylthiazol-5(2H)-ylidene]ethyl phosphate binding; sequence TST. Position 146 (K146) interacts with 4-amino-2-methyl-5-(diphosphooxymethyl)pyrimidine. 2-[(2R,5Z)-2-carboxy-4-methylthiazol-5(2H)-ylidene]ethyl phosphate is bound by residues G175 and 195 to 196; that span reads IS.

It belongs to the thiamine-phosphate synthase family. Mg(2+) serves as cofactor.

The enzyme catalyses 2-[(2R,5Z)-2-carboxy-4-methylthiazol-5(2H)-ylidene]ethyl phosphate + 4-amino-2-methyl-5-(diphosphooxymethyl)pyrimidine + 2 H(+) = thiamine phosphate + CO2 + diphosphate. It carries out the reaction 2-(2-carboxy-4-methylthiazol-5-yl)ethyl phosphate + 4-amino-2-methyl-5-(diphosphooxymethyl)pyrimidine + 2 H(+) = thiamine phosphate + CO2 + diphosphate. The catalysed reaction is 4-methyl-5-(2-phosphooxyethyl)-thiazole + 4-amino-2-methyl-5-(diphosphooxymethyl)pyrimidine + H(+) = thiamine phosphate + diphosphate. The protein operates within cofactor biosynthesis; thiamine diphosphate biosynthesis; thiamine phosphate from 4-amino-2-methyl-5-diphosphomethylpyrimidine and 4-methyl-5-(2-phosphoethyl)-thiazole: step 1/1. Condenses 4-methyl-5-(beta-hydroxyethyl)thiazole monophosphate (THZ-P) and 2-methyl-4-amino-5-hydroxymethyl pyrimidine pyrophosphate (HMP-PP) to form thiamine monophosphate (TMP). This Bacillus thuringiensis subsp. konkukian (strain 97-27) protein is Thiamine-phosphate synthase.